A 239-amino-acid polypeptide reads, in one-letter code: Protein G1-like8 (239 aa).

2 disordered regions span residues 1 to 35 (MEGG…RYES) and 149 to 239 (KARG…ATRV). Residues 9–29 (DAQAQAQPVAQAPPAMQPMQQ) are compositionally biased toward low complexity. The region spanning 32–159 (RYESQKRRDW…ARGIPYEKKK (128 aa)) is the ALOG domain. The Nuclear localization signal signature appears at 157-161 (KKKRK). Pro residues predominate over residues 167 to 178 (QPPPQPPLPPQH). Composition is skewed to low complexity over residues 179-215 (QPGA…ATSQ) and 223-239 (TTTT…ATRV).

It belongs to the plant homeotic and developmental regulators ALOG protein family.

It localises to the nucleus. In terms of biological role, probable transcription regulator that acts as a developmental regulator by promoting cell growth in response to light. The sequence is that of Protein G1-like8 from Oryza sativa subsp. indica (Rice).